The sequence spans 366 residues: Cytochrome c peroxidase, mitochondrial (366 aa).

His-123 serves as the catalytic Proton acceptor. Over residues 195-206 the composition is skewed to basic and acidic residues; it reads IEWRPGRVDDNT. Residues 195–218 are disordered; that stretch reads IEWRPGRVDDNTASKVPPNGRLPD. Position 247 (His-247) interacts with heme b. Trp-263 (tryptophan radical intermediate) is an active-site residue.

It belongs to the peroxidase family. Cytochrome c peroxidase subfamily. Forms a one-to-one complex with cytochrome c. It depends on heme b as a cofactor.

Its subcellular location is the mitochondrion matrix. It is found in the mitochondrion intermembrane space. It catalyses the reaction 2 Fe(II)-[cytochrome c] + H2O2 + 2 H(+) = 2 Fe(III)-[cytochrome c] + 2 H2O. Functionally, destroys radicals which are normally produced within the cells and which are toxic to biological systems. The sequence is that of Cytochrome c peroxidase, mitochondrial (CCP1) from Candida albicans (strain SC5314 / ATCC MYA-2876) (Yeast).